A 483-amino-acid polypeptide reads, in one-letter code: Glutamate mutase epsilon subunit (483 aa).

Residue R66 coordinates L-glutamate. Position 68 (G68) interacts with adenosylcob(III)alamin. An L-glutamate-binding site is contributed by R100. N123 is a binding site for adenosylcob(III)alamin. Residues 149–150 (RH), E171, and Y177 each bind L-glutamate. P180 contacts adenosylcob(III)alamin. Y181 is an L-glutamate binding site. The adenosylcob(III)alamin site is built by F297, K326, E330, and I334.

Belongs to the methylaspartate mutase GlmE subunit family. In terms of assembly, heterotetramer composed of 2 epsilon subunits (GlmE) and 2 sigma subunits (GlmS). GlmE exists as a homodimer and GlmS as a monomer. Requires adenosylcob(III)alamin as cofactor.

It carries out the reaction (2S,3S)-3-methyl-L-aspartate = L-glutamate. It functions in the pathway amino-acid degradation; L-glutamate degradation via mesaconate pathway; acetate and pyruvate from L-glutamate: step 1/4. With respect to regulation, competitively inhibited by (2S,4S)-4-fluoroglutamate, 2-methyleneglutarate, (2R,3RS)-3-fluoroglutamate and (S)-3-methylitaconate. Catalyzes the carbon skeleton rearrangement of L-glutamate to L-threo-3-methylaspartate ((2S,3S)-3-methylaspartate). This is Glutamate mutase epsilon subunit from Clostridium cochlearium.